The primary structure comprises 887 residues: Alanine--tRNA ligase (887 aa).

Zn(2+) is bound by residues histidine 564, histidine 568, cysteine 676, and histidine 680.

It belongs to the class-II aminoacyl-tRNA synthetase family. Requires Zn(2+) as cofactor.

It localises to the cytoplasm. It catalyses the reaction tRNA(Ala) + L-alanine + ATP = L-alanyl-tRNA(Ala) + AMP + diphosphate. Its function is as follows. Catalyzes the attachment of alanine to tRNA(Ala) in a two-step reaction: alanine is first activated by ATP to form Ala-AMP and then transferred to the acceptor end of tRNA(Ala). Also edits incorrectly charged Ser-tRNA(Ala) and Gly-tRNA(Ala) via its editing domain. This chain is Alanine--tRNA ligase, found in Chelativorans sp. (strain BNC1).